We begin with the raw amino-acid sequence, 328 residues long: Solute-binding protein Bamb_6123 (328 aa).

The first 26 residues, 1-26 (MTHRFPRSRTALAVALMAGFAMSAQA), serve as a signal peptide directing secretion. Beta-D-galacturonate-binding residues include His35, Glu73, Arg89, Arg149, Asn209, and Glu236. The beta-D-glucuronate site is built by His35, Glu73, Arg89, Arg149, Asn209, and Glu236.

Belongs to the bacterial solute-binding protein 7 family. In terms of assembly, the complex is comprised of an extracytoplasmic solute-binding protein and a heteromeric permease formed by two transmembrane proteins.

It localises to the periplasm. In terms of biological role, solute-binding protein that binds D-galacturonate and D-glucuronate (in vitro). Probably part of a tripartite ATP-independent periplasmic (TRAP) transport system that mediates solute transport into the cytoplasm. This chain is Solute-binding protein Bamb_6123, found in Burkholderia ambifaria (strain ATCC BAA-244 / DSM 16087 / CCUG 44356 / LMG 19182 / AMMD) (Burkholderia cepacia (strain AMMD)).